A 285-amino-acid chain; its full sequence is MATTRLNPSCHFPASTRLSCESYLGLRTTGRISYARTLTAPRGYLAVKANGGQASVVTAAAITEKQQKKYPGESKGFVEEMRFVAMRLHTKDQAREGEKESRSPEEGPVAKWEPTVEGYLHFLVDSKLVYDTLEGIIDGSNFPTYAGFKNTGLERAESLRKDLEWFKEQGYEIPEPMAPGKTYSEYLKDLAENDPQAFICHFYNIYFAHSAGGQMIGTKVSKKILDNKELEFYKWDGQLSQLLQNVRQKLNKVAEWWTREEKSHCLEETEKSFKFSGEILRLILS.

A chloroplast-targeting transit peptide spans 1 to 58; sequence MATTRLNPSCHFPASTRLSCESYLGLRTTGRISYARTLTAPRGYLAVKANGGQASVVT. Heme b is bound at residue histidine 89. A compositionally biased stretch (basic and acidic residues) spans 89-105; sequence HTKDQAREGEKESRSPE. Residues 89 to 109 form a disordered region; it reads HTKDQAREGEKESRSPEEGPV.

It belongs to the heme oxygenase family. Widely expressed at low levels.

The protein resides in the plastid. It localises to the chloroplast. The enzyme catalyses heme b + 3 reduced [NADPH--hemoprotein reductase] + 3 O2 = biliverdin IXalpha + CO + Fe(2+) + 3 oxidized [NADPH--hemoprotein reductase] + 3 H2O + H(+). Functionally, catalyzes the opening of the heme ring to form the open-chain tetrapyrrole biliverdin IX with the release of iron and carbon monoxide (CO). Produces specifically the biliverdin IX-alpha isomer. Plays a minor role in phytochrome assembly and photomorphogenesis. The polypeptide is Heme oxygenase 3, chloroplastic (HO3) (Arabidopsis thaliana (Mouse-ear cress)).